The chain runs to 516 residues: Facilitated glucose transporter homolog (516 aa).

The interval 1–37 is disordered; that stretch reads MNAVVASQNKNDRSFSNMESESSSNVEKSEKENHHQS. The Cytoplasmic segment spans residues 1 to 47; that stretch reads MNAVVASQNKNDRSFSNMESESSSNVEKSEKENHHQSLPDENWTPFL. A compositionally biased stretch (low complexity) spans 14–26; sequence SFSNMESESSSNV. A compositionally biased stretch (basic and acidic residues) spans 27–37; it reads EKSEKENHHQS. A helical membrane pass occupies residues 48–68; sequence FFCISSIALASFQDGFQIGCI. Residues 69–101 are Extracellular-facing; sequence NAPGPLIIDWIKKCHFELFGEVLSQYQADFIWS. Residues 102–122 form a helical membrane-spanning segment; sequence VAVSMFSVGGMFGSFCSGFLA. The Cytoplasmic portion of the chain corresponds to 123–138; the sequence is DKFGRKSTLLYNNILA. A helical transmembrane segment spans residues 139–159; it reads LLAAVCLSTSKLFNFYPMIVF. The Extracellular segment spans residues 160 to 161; it reads GR. Residues 162-182 traverse the membrane as a helical segment; that stretch reads FLVGLNCGITSGLVPMFLTEL. At 183-200 the chain is on the cytoplasmic side; that stretch reads APANLRGKCGSFHQLNIS. A helical membrane pass occupies residues 201–221; it reads VAIVLSQALGLPQIFGTQVGW. Residue proline 222 is a topological domain, extracellular. The helical transmembrane segment at 223–243 threads the bilayer; sequence YIFACVAIPTFLQLATIPFCV. Residues 244 to 306 are Cytoplasmic-facing; sequence ESPKYLISKL…SLFKGDNQWP (63 aa). The chain crosses the membrane as a helical span at residues 307-327; the sequence is MIVSILMMFSQQFSGISAVTF. Residues 328 to 344 are Extracellular-facing; the sequence is YSTLIFKRNGLSGNEPM. The chain crosses the membrane as a helical span at residues 345-365; that stretch reads YATVGFGCIKLIATFGCLFLI. At 366 to 376 the chain is on the cytoplasmic side; sequence DHPKFGRKRLH. A helical transmembrane segment spans residues 377–397; sequence IAGLSGMCISSILIVITLTLS. Residues 398–409 are Extracellular-facing; sequence NAGYHWASYMNV. A helical membrane pass occupies residues 410–430; the sequence is LFILSFVVTFAFGPGPIPWFF. Over 431-444 the chain is Cytoplasmic; the sequence is TSELFDSATRGRAA. Residues 445–465 form a helical membrane-spanning segment; it reads AVSATSNWVANWMVGLTFLPI. At 466 to 471 the chain is on the extracellular side; the sequence is NNIIHQ. The chain crosses the membrane as a helical span at residues 472-492; sequence YAFLMFTFFTFTFAIFTWKFV. Residues 493–516 are Cytoplasmic-facing; that stretch reads PETKGKSPSAIRKELAFMRKRICS.

The protein belongs to the major facilitator superfamily. Sugar transporter (TC 2.A.1.1) family. In terms of tissue distribution, expressed in seam cells from the early embryonic stage through the L2 stage (at protein level).

Its subcellular location is the cell membrane. In terms of biological role, appears to have no transport activity for glucose. The sequence is that of Facilitated glucose transporter homolog from Caenorhabditis elegans.